The primary structure comprises 218 residues: Trimethylamine corrinoid protein 2 (218 aa).

In terms of domain architecture, B12-binding N-terminal spans 1-92; sequence MAGKEEIIAK…EMEKRKSQTK (92 aa). One can recognise a B12-binding domain in the interval 94–218; the sequence is LGTVIIGTIE…AKVKAALKVG (125 aa). Residue histidine 107 coordinates methylcob(III)alamin.

Belongs to the methylamine corrinoid protein family. In terms of assembly, can form a complex with MttB.

It participates in one-carbon metabolism; methanogenesis from trimethylamine. In terms of biological role, acts probably as a methyl group carrier between MttB and either MtbA or MtaA. In Methanosarcina mazei (strain ATCC BAA-159 / DSM 3647 / Goe1 / Go1 / JCM 11833 / OCM 88) (Methanosarcina frisia), this protein is Trimethylamine corrinoid protein 2 (mttC2).